A 217-amino-acid chain; its full sequence is Putative thymidylate synthase (217 aa).

Residue Cys139 is part of the active site.

This sequence belongs to the thymidylate synthase family. Archaeal-type ThyA subfamily. Monomer.

The protein localises to the cytoplasm. It functions in the pathway pyrimidine metabolism; dTTP biosynthesis. Its function is as follows. May catalyze the biosynthesis of dTMP using an unknown cosubstrate. The polypeptide is Putative thymidylate synthase (Methanococcoides burtonii (strain DSM 6242 / NBRC 107633 / OCM 468 / ACE-M)).